A 377-amino-acid polypeptide reads, in one-letter code: Adenosine 3'-phospho 5'-phosphosulfate transporter 2 (377 aa).

10 consecutive transmembrane segments (helical) span residues 50 to 70 (LCCGGVFALYLVYGYMQELIF), 77 to 97 (PYGWYLTLVQFAYYTAFGYIE), 115 to 135 (ALLAFLTLGTMGLSNSSVGYL), 138 to 158 (PTQVIFKCCKLIPVLIGSVLI), 164 to 184 (GPMDFFAATAMCLGLILFTLA), 195 to 215 (FGVFLISLALLCDAAIGNVQE), 228 to 248 (VVIYSYGIGFVYLAVIMLLSG), 266 to 286 (GYAFLFSLTGYLGIQIVLTLV), 293 to 313 (LAATVTTARKAVTIALSFVFF), and 317 to 337 (FTIQYLWSGLIVVFGIYLNVY).

This sequence belongs to the nucleotide-sugar transporter family. SLC35B subfamily.

Its subcellular location is the golgi apparatus membrane. Functionally, mediates the transport of adenosine 3'-phospho 5'-phosphosulfate (PAPS), from cytosol into Golgi. PAPS is a universal sulfuryl donor for sulfation events that take place in the Golgi. Essential for viability. Involved in glycosaminoglycan synthesis and the subsequent signaling. May be involved in hh and dpp signaling by controlling the sulfation of heparan sulfate (HS). This is Adenosine 3'-phospho 5'-phosphosulfate transporter 2 from Anopheles gambiae (African malaria mosquito).